A 367-amino-acid polypeptide reads, in one-letter code: snRNA-activating protein complex subunit 1 (367 aa).

Residues 1–168 are SNAPC3-binding; sequence MGTPPGLQTD…EEFKDPSDRV (168 aa). Positions 164-268 are SNAPC4-binding; it reads PSDRVMKLIT…AESLAKIKSK (105 aa). Disordered stretches follow at residues 228–254 and 278–367; these read KDRKNPSLKSKINDGEEKMEGNSQETE and KSRR…KRKH. Basic and acidic residues predominate over residues 238–254; that stretch reads KINDGEEKMEGNSQETE. 2 positions are modified to phosphoserine: S289 and S290. Residues 292–301 show a composition bias toward polar residues; sequence CDSASGQGQV.

In terms of assembly, part of the SNAPc complex composed of 5 subunits: SNAPC1, SNAPC2, SNAPC3, SNAPC4 and SNAPC5. SNAPC1 interacts with SNAPC3, SNAPC4 and TBP.

It localises to the nucleus. Functionally, part of the SNAPc complex required for the transcription of both RNA polymerase II and III small-nuclear RNA genes. Binds to the proximal sequence element (PSE), a non-TATA-box basal promoter element common to these 2 types of genes. Recruits TBP and BRF2 to the U6 snRNA TATA box. In Macaca fascicularis (Crab-eating macaque), this protein is snRNA-activating protein complex subunit 1 (SNAPC1).